The following is a 500-amino-acid chain: Probable E3 ubiquitin-protein ligase ARI16 (500 aa).

A TRIAD supradomain region spans residues 74-288 (NSNSSSADRE…QGNWNCSPVA (215 aa)). The segment at 78–130 (SSADRETGDGDYLVSTPFCSHKFSTTCWSEYLSDALKKNKEQRGLISCLSQDC) adopts an RING-type 1 zinc-finger fold. Zn(2+)-binding residues include Cys96, His98, Cys125, Cys130, Cys169, Cys174, Cys194, Cys196, Cys201, Cys204, His209, Cys214, Cys241, Cys244, Cys261, Cys263, Cys268, Cys271, His278, and Cys284. The IBR-type zinc finger occupies 148–214 (EMYENYILES…GLESHRPVSC (67 aa)). The RING-type 2; atypical zinc finger occupies 241–271 (CPKCKIPVQQNGDPNYRLINCICSNNFCWIC). The segment at 453–483 (EPGSRWFCDRCTFENSWVDKQCKMCFFPLDY) adopts a RanBP2-type zinc-finger fold.

This sequence belongs to the RBR family. Ariadne subfamily. The cofactor is Zn(2+). As to expression, preferentially expressed in green siliques.

The enzyme catalyses [E2 ubiquitin-conjugating enzyme]-S-ubiquitinyl-L-cysteine + [acceptor protein]-L-lysine = [E2 ubiquitin-conjugating enzyme]-L-cysteine + [acceptor protein]-N(6)-ubiquitinyl-L-lysine.. It functions in the pathway protein modification; protein ubiquitination. Functionally, might act as an E3 ubiquitin-protein ligase, or as part of E3 complex, which accepts ubiquitin from specific E2 ubiquitin-conjugating enzymes and then transfers it to substrates. The polypeptide is Probable E3 ubiquitin-protein ligase ARI16 (ARI16) (Arabidopsis thaliana (Mouse-ear cress)).